The chain runs to 264 residues: Phosphatidylglycerol--prolipoprotein diacylglyceryl transferase (264 aa).

The next 4 membrane-spanning stretches (helical) occupy residues 17 to 37 (LAIH…YLLG), 57 to 77 (LIFY…VLFY), 89 to 109 (IAFL…VILV), and 118 to 138 (GVSF…GLGA). Position 140 (R140) interacts with a 1,2-diacyl-sn-glycero-3-phospho-(1'-sn-glycerol). 3 helical membrane passes run 173 to 193 (PSQL…LWWF), 201 to 221 (GQVS…VEFT), and 237 to 257 (MGQW…VLTA).

Belongs to the Lgt family.

The protein localises to the cell inner membrane. It carries out the reaction L-cysteinyl-[prolipoprotein] + a 1,2-diacyl-sn-glycero-3-phospho-(1'-sn-glycerol) = an S-1,2-diacyl-sn-glyceryl-L-cysteinyl-[prolipoprotein] + sn-glycerol 1-phosphate + H(+). It participates in protein modification; lipoprotein biosynthesis (diacylglyceryl transfer). Functionally, catalyzes the transfer of the diacylglyceryl group from phosphatidylglycerol to the sulfhydryl group of the N-terminal cysteine of a prolipoprotein, the first step in the formation of mature lipoproteins. In Bordetella avium (strain 197N), this protein is Phosphatidylglycerol--prolipoprotein diacylglyceryl transferase.